The following is a 542-amino-acid chain: Organic anion transporter 3 (542 aa).

Over 1–9 (MTFSEILDR) the chain is Cytoplasmic. Serine 4 carries the phosphoserine modification. The chain crosses the membrane as a helical span at residues 10-30 (VGSMGPFQFLHVALLGFPILG). The Extracellular portion of the chain corresponds to 31 to 123 (MANHNLLQIF…LVCSSNKLKE (93 aa)). The N-linked (GlcNAc...) asparagine glycan is linked to asparagine 86. The chain crosses the membrane as a helical span at residues 124–144 (MAQSIFMAGILIGGLVLGDLS). Residues 145-150 (DRFGRK) are Cytoplasmic-facing. A helical membrane pass occupies residues 151 to 171 (PILTCCYLLLAASGSSTAFSP). Residues 172–176 (TLPIY) are Extracellular-facing. The chain crosses the membrane as a helical span at residues 177–197 (MVFRFLCGFSISGISLSTVIL). At 198–212 (NVEWVPTKMRAITST) the chain is on the cytoplasmic side. Residues 213–233 (AIGYCYTIGQFILPGLAYAIP) form a helical membrane-spanning segment. Residues 234 to 236 (QWR) lie on the Extracellular side of the membrane. The helical transmembrane segment at 237–257 (WLQLTVSVPYFIFSLLSWWIP) threads the bilayer. Residues 258-327 (ESIRWLVLAG…FRTPILRRVT (70 aa)) lie on the Cytoplasmic side of the membrane. A helical transmembrane segment spans residues 328–348 (LCLSLAWFATGFAYYSLAMGV). Topologically, residues 349 to 354 (EEFGVN) are extracellular. A helical transmembrane segment spans residues 355-375 (IYILQIIFGGVDIPAKFITIL). Residues 376-389 (SLSYLGRHITQGAA) lie on the Cytoplasmic side of the membrane. Residues 390-410 (LILAGAAILSLIFVPMDMSLL) traverse the membrane as a helical segment. Position 411 (arginine 411) is a topological domain, extracellular. The helical transmembrane segment at 412–432 (TILAVFGKGCLSGSFSCLFLY) threads the bilayer. Topologically, residues 433–471 (TSELFPTVIRQTGMGISNVWARVGSMISPLVKITGEIQP) are cytoplasmic. The helical transmembrane segment at 472–492 (FIPNIIYGTVALLGGSAALFL) threads the bilayer. Residues 493–542 (PETLNQPLPETLEDMENWFLQSKKLKQEPEAEKASQRIPLQPSGPGVDRS) lie on the Extracellular side of the membrane. The span at 518 to 527 (KQEPEAEKAS) shows a compositional bias: basic and acidic residues. The disordered stretch occupies residues 518 to 542 (KQEPEAEKASQRIPLQPSGPGVDRS).

The protein belongs to the major facilitator (TC 2.A.1) superfamily. Organic cation transporter (TC 2.A.1.19) family.

The protein localises to the basolateral cell membrane. It carries out the reaction estrone 3-sulfate(out) + glutarate(in) = estrone 3-sulfate(in) + glutarate(out). The catalysed reaction is estrone 3-sulfate(in) + 2-oxoglutarate(out) = estrone 3-sulfate(out) + 2-oxoglutarate(in). The enzyme catalyses glutarate(in) + 2-oxoglutarate(out) = glutarate(out) + 2-oxoglutarate(in). It catalyses the reaction urate(in) + 2-oxoglutarate(out) = urate(out) + 2-oxoglutarate(in). It carries out the reaction taurocholate(out) + glutarate(in) = taurocholate(in) + glutarate(out). The catalysed reaction is dehydroepiandrosterone 3-sulfate(out) + glutarate(in) = dehydroepiandrosterone 3-sulfate(in) + glutarate(out). The enzyme catalyses prostaglandin F2alpha(out) + glutarate(in) = prostaglandin F2alpha(in) + glutarate(out). It catalyses the reaction prostaglandin F2alpha(out) + 2-oxoglutarate(in) = prostaglandin F2alpha(in) + 2-oxoglutarate(out). It carries out the reaction (R)-carnitine(out) + 2-oxoglutarate(in) = (R)-carnitine(in) + 2-oxoglutarate(out). The catalysed reaction is glutarate(in) + (R)-carnitine(out) = glutarate(out) + (R)-carnitine(in). The enzyme catalyses prostaglandin E2(out) + 2-oxoglutarate(in) = prostaglandin E2(in) + 2-oxoglutarate(out). It catalyses the reaction prostaglandin E2(out) + glutarate(in) = prostaglandin E2(in) + glutarate(out). It carries out the reaction urate(in) + glutarate(out) = urate(out) + glutarate(in). The catalysed reaction is taurocholate(out) + 2-oxoglutarate(in) = taurocholate(in) + 2-oxoglutarate(out). The enzyme catalyses dehydroepiandrosterone 3-sulfate(out) + 2-oxoglutarate(in) = dehydroepiandrosterone 3-sulfate(in) + 2-oxoglutarate(out). It catalyses the reaction kynurenate(out) + a dicarboxylate(in) = kynurenate(in) + a dicarboxylate(out). It carries out the reaction (indol-3-yl)acetate(out) + a dicarboxylate(in) = (indol-3-yl)acetate(in) + a dicarboxylate(out). The catalysed reaction is indoxyl sulfate(out) + a dicarboxylate(in) = indoxyl sulfate(in) + a dicarboxylate(out). The enzyme catalyses N-benzoylglycine(out) + a dicarboxylate(in) = N-benzoylglycine(in) + a dicarboxylate(out). It catalyses the reaction 3-carboxy-4-methyl-5-propyl-2-furanpropanoate(out) + a dicarboxylate(in) = 3-carboxy-4-methyl-5-propyl-2-furanpropanoate(in) + a dicarboxylate(out). It carries out the reaction (6R)-L-erythro-5,6,7,8-tetrahydrobiopterin(out) + a dicarboxylate(in) = (6R)-L-erythro-5,6,7,8-tetrahydrobiopterin(in) + a dicarboxylate(out). The catalysed reaction is L-erythro-7,8-dihydrobiopterin(out) + a dicarboxylate(in) = L-erythro-7,8-dihydrobiopterin(in) + a dicarboxylate(out). The enzyme catalyses L-sepiapterin(out) + a dicarboxylate(in) = L-sepiapterin(in) + a dicarboxylate(out). Functions as an organic anion/dicarboxylate exchanger that couples organic anion uptake indirectly to the sodium gradient. Transports organic anions such as estrone 3-sulfate (E1S) and urate in exchange for dicarboxylates such as glutarate or ketoglutarate (2-oxoglutarate). Plays an important role in the excretion of endogenous and exogenous organic anions, especially from the kidney and the brain. E1S transport is pH- and chloride-dependent and may also involve E1S/cGMP exchange. Responsible for the transport of prostaglandin E2 (PGE2) and prostaglandin F2(alpha) (PGF2(alpha)) in the basolateral side of the renal tubule. Involved in the transport of neuroactive tryptophan metabolites kynurenate and xanthurenate. Functions as a biopterin transporters involved in the uptake and the secretion of coenzymes tetrahydrobiopterin (BH4), dihydrobiopterin (BH2) and sepiapterin to urine, thereby determining baseline levels of blood biopterins. May be involved in the basolateral transport of steviol, a metabolite of the popular sugar substitute stevioside. May participate in the detoxification/ renal excretion of drugs and xenobiotics, such as the histamine H(2)-receptor antagonists fexofenadine and cimetidine, the antibiotic benzylpenicillin (PCG), the anionic herbicide 2,4-dichloro-phenoxyacetate (2,4-D), the diagnostic agent p-aminohippurate (PAH), the antiviral acyclovir (ACV), and the mycotoxin ochratoxin (OTA), by transporting these exogenous organic anions across the cell membrane in exchange for dicarboxylates such as 2-oxoglutarate. Contributes to the renal uptake of potent uremic toxins (indoxyl sulfate (IS), indole acetate (IA), hippurate/N-benzoylglycine (HA) and 3-carboxy-4-methyl-5-propyl-2-furanpropionate (CMPF)), pravastatin, PCG, E1S and dehydroepiandrosterone sulfate (DHEAS), and is partly involved in the renal uptake of temocaprilat (an angiotensin-converting enzyme (ACE) inhibitor). May contribute to the release of cortisol in the adrenals. Involved in one of the detoxification systems on the choroid plexus (CP), removes substrates such as E1S or taurocholate (TC), PCG, 2,4-D and PAH, from the cerebrospinal fluid (CSF) to the blood for eventual excretion in urine and bile. Also contributes to the uptake of several other organic compounds such as the prostanoids prostaglandin E(2) and prostaglandin F(2-alpha), L-carnitine, and the therapeutic drugs allopurinol, 6-mercaptopurine (6-MP) and 5-fluorouracil (5-FU). Mediates the transport of PAH, PCG, and the statins pravastatin and pitavastatin, from the cerebrum into the blood circulation across the blood-brain barrier (BBB). In summary, plays a role in the efflux of drugs and xenobiotics, helping reduce their undesired toxicological effects on the body. The chain is Organic anion transporter 3 (SLC22A8) from Oryctolagus cuniculus (Rabbit).